A 312-amino-acid polypeptide reads, in one-letter code: Glyoxylate/hydroxypyruvate reductase A (312 aa).

Residue Arg227 is part of the active site. The active-site Proton donor is His275.

The protein belongs to the D-isomer specific 2-hydroxyacid dehydrogenase family. GhrA subfamily.

Its subcellular location is the cytoplasm. It catalyses the reaction glycolate + NADP(+) = glyoxylate + NADPH + H(+). The catalysed reaction is (R)-glycerate + NAD(+) = 3-hydroxypyruvate + NADH + H(+). It carries out the reaction (R)-glycerate + NADP(+) = 3-hydroxypyruvate + NADPH + H(+). Its function is as follows. Catalyzes the NADPH-dependent reduction of glyoxylate and hydroxypyruvate into glycolate and glycerate, respectively. This chain is Glyoxylate/hydroxypyruvate reductase A, found in Salmonella paratyphi B (strain ATCC BAA-1250 / SPB7).